The sequence spans 129 residues: Glycine cleavage system H protein (129 aa).

Positions 24–106 constitute a Lipoyl-binding domain; that stretch reads HAVVGITDFA…YDGGWLFKLA (83 aa). An N6-lipoyllysine modification is found at lysine 65.

This sequence belongs to the GcvH family. In terms of assembly, the glycine cleavage system is composed of four proteins: P, T, L and H. (R)-lipoate serves as cofactor.

In terms of biological role, the glycine cleavage system catalyzes the degradation of glycine. The H protein shuttles the methylamine group of glycine from the P protein to the T protein. This Hydrogenovibrio crunogenus (strain DSM 25203 / XCL-2) (Thiomicrospira crunogena) protein is Glycine cleavage system H protein.